Reading from the N-terminus, the 364-residue chain is Protein-glutamate methylesterase/protein-glutamine glutaminase (364 aa).

One can recognise a Response regulatory domain in the interval 7–124; the sequence is RALIVDDSAL…SQNMPDMAEE (118 aa). At Asp58 the chain carries 4-aspartylphosphate. The region spanning 167-364 is the CheB-type methylesterase domain; it reads ETTSFVRNVL…MAEEIVKIIS (198 aa). Active-site residues include Ser181, His208, and Asp308.

It belongs to the CheB family. Phosphorylated by CheA. Phosphorylation of the N-terminal regulatory domain activates the methylesterase activity.

It is found in the cytoplasm. The catalysed reaction is [protein]-L-glutamate 5-O-methyl ester + H2O = L-glutamyl-[protein] + methanol + H(+). The enzyme catalyses L-glutaminyl-[protein] + H2O = L-glutamyl-[protein] + NH4(+). In terms of biological role, involved in chemotaxis. Part of a chemotaxis signal transduction system that modulates chemotaxis in response to various stimuli. Catalyzes the demethylation of specific methylglutamate residues introduced into the chemoreceptors (methyl-accepting chemotaxis proteins or MCP) by CheR. Also mediates the irreversible deamidation of specific glutamine residues to glutamic acid. The chain is Protein-glutamate methylesterase/protein-glutamine glutaminase from Methanosarcina barkeri (strain Fusaro / DSM 804).